The chain runs to 132 residues: Small ribosomal subunit protein uS11 (132 aa).

A disordered region spans residues Met1–Val21. The segment covering Ala7–Lys16 has biased composition (basic residues).

This sequence belongs to the universal ribosomal protein uS11 family. As to quaternary structure, part of the 30S ribosomal subunit. Interacts with proteins S7 and S18. Binds to IF-3.

Functionally, located on the platform of the 30S subunit, it bridges several disparate RNA helices of the 16S rRNA. Forms part of the Shine-Dalgarno cleft in the 70S ribosome. The protein is Small ribosomal subunit protein uS11 of Clavibacter sepedonicus (Clavibacter michiganensis subsp. sepedonicus).